The following is a 308-amino-acid chain: Phosphatidate cytidylyltransferase (308 aa).

8 helical membrane passes run 30 to 50 (FLVLLLYSSLFPLTSFALGFI), 73 to 93 (PLSTFSAIGSFLFLALSFLSI), 100 to 120 (PGFFDALPWTLLIVWVVWSIF), 127 to 147 (IGALQLSGVTLFSILYVGIPI), 167 to 187 (IWWASFLIATTKGADIFGYFF), 205 to 225 (TVVGFVAGCLGATLISFIFFL), 235 to 255 (FPMPAILIPLGLALGITGFFG), and 280 to 300 (MLDTLDSLLLSTPIAYLFLLI).

This sequence belongs to the CDS family.

It is found in the cell membrane. The catalysed reaction is a 1,2-diacyl-sn-glycero-3-phosphate + CTP + H(+) = a CDP-1,2-diacyl-sn-glycerol + diphosphate. Its pathway is phospholipid metabolism; CDP-diacylglycerol biosynthesis; CDP-diacylglycerol from sn-glycerol 3-phosphate: step 3/3. This is Phosphatidate cytidylyltransferase (cdsA) from Chlamydia pneumoniae (Chlamydophila pneumoniae).